A 600-amino-acid polypeptide reads, in one-letter code: Elongation factor 4 (600 aa).

A tr-type G domain is found at 5–187 (KYIRNFSIIA…AIVNKLPPPK (183 aa)). Residues 17-22 (DHGKST) and 134-137 (NKLD) contribute to the GTP site.

The protein belongs to the TRAFAC class translation factor GTPase superfamily. Classic translation factor GTPase family. LepA subfamily.

The protein localises to the cell inner membrane. It catalyses the reaction GTP + H2O = GDP + phosphate + H(+). Functionally, required for accurate and efficient protein synthesis under certain stress conditions. May act as a fidelity factor of the translation reaction, by catalyzing a one-codon backward translocation of tRNAs on improperly translocated ribosomes. Back-translocation proceeds from a post-translocation (POST) complex to a pre-translocation (PRE) complex, thus giving elongation factor G a second chance to translocate the tRNAs correctly. Binds to ribosomes in a GTP-dependent manner. In Rickettsia africae (strain ESF-5), this protein is Elongation factor 4.